A 42-amino-acid chain; its full sequence is Perlinhibin-related protein (42 aa).

Contains four disulfide bonds.

In terms of biological role, inhibitor of shell growth. The chain is Perlinhibin-related protein from Haliotis laevigata (Smooth Australian abalone).